A 1221-amino-acid polypeptide reads, in one-letter code: 2-oxoglutarate dehydrogenase E1/E2 component (1221 aa).

A 2-oxoglutarate dehydrogenase E1, N-terminal part region spans residues Ser2 to Gly40. Residues Gln22–Ile107 are disordered. The span at Lys23–Phe36 shows a compositional bias: basic and acidic residues. Positions Gly41–Gln52 are enriched in polar residues. Positions Gly41–Lys89 are linker. Residues Pro53 to Ala73 show a composition bias toward low complexity. A compositionally biased stretch (basic and acidic residues) spans Pro74–Glu90. Positions Glu90 to Asp337 are succinyltransferase E2. The active-site Proton acceptor; for succinyltransferase activity is His316. The interval Asp338 to Ala1221 is 2-oxoglutarate dehydrogenase E1, C-terminal part. Arg544 serves as a coordination point for thiamine diphosphate. His583 and Ser608 together coordinate 2-oxoglutarate. Thiamine diphosphate contacts are provided by Ser608, Leu610, Asp645, Ala646, Ala647, and Asn678. Asp645 contributes to the Mg(2+) binding site. Asn678 and Ile680 together coordinate Mg(2+). His1017 provides a ligand contact to 2-oxoglutarate. 5 residues coordinate acetyl-CoA: Thr1035, Arg1051, Lys1087, Ser1090, and Arg1144.

This sequence in the N-terminal section; belongs to the alpha-ketoglutarate dehydrogenase family. In the C-terminal section; belongs to the 2-oxoacid dehydrogenase family. In terms of assembly, homodimer. Part of an unusual ODH/PDH supercomplex, consisting of AceE (E1), AceF (E2), and Lpd (E3) together with OdhA (E1+E2). Interacts with the FHA domain of unphosphorylated OdhI via its C-terminal dehydrogenase domain. Requires Mg(2+) as cofactor. The cofactor is thiamine diphosphate.

The enzyme catalyses N(6)-[(R)-lipoyl]-L-lysyl-[protein] + 2-oxoglutarate + H(+) = N(6)-[(R)-S(8)-succinyldihydrolipoyl]-L-lysyl-[protein] + CO2. The catalysed reaction is N(6)-[(R)-dihydrolipoyl]-L-lysyl-[protein] + succinyl-CoA = N(6)-[(R)-S(8)-succinyldihydrolipoyl]-L-lysyl-[protein] + CoA. It functions in the pathway carbohydrate metabolism; tricarboxylic acid cycle; succinyl-CoA from 2-oxoglutarate (dehydrogenase route): step 1/1. With respect to regulation, inhibited by unphosphorylated OdhI, but not by phosphorylated OdhI. Its function is as follows. Catalyzes the E1 and E2 reactions as part of 2-oxoglutarate dehydrogenase (ODH) activity, to convert 2-oxoglutarate to succinyl-CoA and CO(2). OdhA has reductase activity with 2-oxoglutarate but does not react with pyruvate, and also displays transsuccinylase but no transacetylase activity. Since OdhA is not lipoylated, the succinyltransferase activity of its E2 domain is dependent on lipoyl residues of the acetyltransferase AceF. This chain is 2-oxoglutarate dehydrogenase E1/E2 component, found in Corynebacterium glutamicum (strain ATCC 13032 / DSM 20300 / JCM 1318 / BCRC 11384 / CCUG 27702 / LMG 3730 / NBRC 12168 / NCIMB 10025 / NRRL B-2784 / 534).